We begin with the raw amino-acid sequence, 229 residues long: Casparian strip membrane protein 1 (229 aa).

At 1–67 (MSTSEAGAAA…FRRADRGSRC (67 aa)) the chain is on the cytoplasmic side. A helical transmembrane segment spans residues 68–88 (VALLDFVLRVAAFGPALAAAI). Topologically, residues 89–115 (ATGTSDETLSVFTQFFQFHARFDDFPA) are extracellular. A helical membrane pass occupies residues 116 to 136 (LLFFMVANAIAAGYLVLSLPF). The Cytoplasmic portion of the chain corresponds to 137-157 (SAVIVLRPQAIGLRHLLLVCD). Residues 158–178 (MIIAALLTAAAAAAAAIVDLA) traverse the membrane as a helical segment. Topologically, residues 179-205 (HSGNLRANWVPICMQFHGFCQRTSGAV) are extracellular. A helical membrane pass occupies residues 206–226 (VGSFLAVLVLLFLVILAAFAI). Topologically, residues 227 to 229 (RKR) are cytoplasmic.

It belongs to the Casparian strip membrane proteins (CASP) family. In terms of assembly, homodimer and heterodimers.

The protein localises to the cell membrane. Functionally, regulates membrane-cell wall junctions and localized cell wall deposition. Required for establishment of the Casparian strip membrane domain (CSD) and the subsequent formation of Casparian strips, a cell wall modification of the root endodermis that determines an apoplastic barrier between the intraorganismal apoplasm and the extraorganismal apoplasm and prevents lateral diffusion. This chain is Casparian strip membrane protein 1, found in Sorghum bicolor (Sorghum).